The chain runs to 217 residues: MWKLIGALLESRLSNVLDETVRYGNETSERVGRTVSSYIKGDEETARELIETTAAVNEKSYRIEDECLKILGLHQPVAKDLRLASSIMRSAIELERINILLAYIARYAIDGRDRTPPHIEFMSQTVQDMINDALGALMNRDIQLLKRSTRNYIQLQDLYNQLQESNRDFSESGNLMLVARNLLSMGHHVMGMDDRIAYLIVGKRVIHHKVFYSVLMK.

The protein belongs to the PhoU family. As to quaternary structure, homodimer.

It is found in the cytoplasm. Plays a role in the regulation of phosphate uptake. This chain is Phosphate-specific transport system accessory protein PhoU homolog 2, found in Methanothermobacter thermautotrophicus (strain ATCC 29096 / DSM 1053 / JCM 10044 / NBRC 100330 / Delta H) (Methanobacterium thermoautotrophicum).